Consider the following 133-residue polypeptide: Small ribosomal subunit protein bS6 (133 aa).

Belongs to the bacterial ribosomal protein bS6 family.

Binds together with bS18 to 16S ribosomal RNA. The protein is Small ribosomal subunit protein bS6 of Chlorobium phaeovibrioides (strain DSM 265 / 1930) (Prosthecochloris vibrioformis (strain DSM 265)).